Reading from the N-terminus, the 97-residue chain is IVSPPVCGNYFVEVGEECDCGLPRNCQNQCCNATTCKLIPGAQCEDGECCERCQFKGAGNVCRPRRSKCDIAESCTGQSPDCPTDRFRRNGVSCLNN.

Positions 4-90 (PPVCGNYFVE…DCPTDRFRRN (87 aa)) constitute a Disintegrin domain. Ca(2+)-binding residues include V6, N9, F11, E13, E16, and D19. 7 cysteine pairs are disulfide-bonded: C7/C36, C18/C31, C20/C26, C30/C53, C44/C50, C49/C75, and C62/C82. N-linked (GlcNAc...) asparagine glycosylation is present at N32. The D/ECD-tripeptide; atypical (KCD) motif lies at 68–70 (KCD).

The protein belongs to the venom metalloproteinase (M12B) family. P-III subfamily. P-IIIa sub-subfamily. In terms of assembly, monomer. Requires Zn(2+) as cofactor. In terms of tissue distribution, expressed by the venom gland.

It is found in the secreted. In terms of biological role, the hemorrhagic metalloproteinase-disintegrin-like bothrojarin-1 is a potent inhibitor of collagen-induced platelet aggregation by blockage of alpha-2/beta-1 (ITGA2/ITGB1) integrin. It does not present any fibrinogen-clotting activity. The sequence is that of Zinc metalloproteinase-disintegrin-like bothrojarin-4 from Bothrops jararaca (Jararaca).